Consider the following 507-residue polypeptide: Maturase K (507 aa).

It belongs to the intron maturase 2 family. MatK subfamily.

The protein localises to the plastid. The protein resides in the chloroplast. Functionally, usually encoded in the trnK tRNA gene intron. Probably assists in splicing its own and other chloroplast group II introns. This chain is Maturase K, found in Magnolia champaca (Yellow jade orchid tree).